The primary structure comprises 1178 residues: Phosphate system positive regulatory protein PHO81 (1178 aa).

Residues 1 to 169 (MKFGKYLEAR…QSHDKDFYLA (169 aa)) form the SPX domain. The disordered stretch occupies residues 210–250 (QSSTFTNDDDDDNNTSNNNKHNNNNNNNNNNNNNNNNNNIL). Residues 223-250 (NTSNNNKHNNNNNNNNNNNNNNNNNNIL) show a composition bias toward low complexity. ANK repeat units lie at residues 423 to 452 (HSRV…LEDV), 458 to 487 (DSKT…ANAS), 506 to 535 (VQFD…KQNA), 556 to 586 (TGLC…DPNE), 591 to 620 (NKWT…RLDI), and 624 to 653 (NGHS…NLPS). One can recognise a GP-PDE domain in the interval 871–1178 (IINYEPYWKS…ELLFENNIDM (308 aa)). At Ser-956 the chain carries Phosphoserine.

In terms of assembly, associates specifically with the PHO80-PHO85 and PCL7-PHO85 cyclin-CDK complexes, and much of this interaction is mediated through the PHO80 and PCL7 cyclin subunits. Interacts with the transcription factor PHO4. Phosphorylated by the cyclin-CDK PHO80-PHO85. Phosphorylation mediates the formation of a stable interaction with the cyclin-CDK and is required for function as an active inhibitor of the complex under phosphate starvation conditions.

Its subcellular location is the cytoplasm. It localises to the nucleus. In terms of biological role, inhibits the kinase activity of the cyclin-CDKs PHO80-PHO85 and PCL7-PHO85 under low-phosphate conditions. The chain is Phosphate system positive regulatory protein PHO81 (PHO81) from Saccharomyces cerevisiae (strain ATCC 204508 / S288c) (Baker's yeast).